Reading from the N-terminus, the 342-residue chain is Tetraacyldisaccharide 4'-kinase (342 aa).

68 to 75 is an ATP binding site; sequence TVGGTGKT.

Belongs to the LpxK family.

The catalysed reaction is a lipid A disaccharide + ATP = a lipid IVA + ADP + H(+). It functions in the pathway glycolipid biosynthesis; lipid IV(A) biosynthesis; lipid IV(A) from (3R)-3-hydroxytetradecanoyl-[acyl-carrier-protein] and UDP-N-acetyl-alpha-D-glucosamine: step 6/6. Functionally, transfers the gamma-phosphate of ATP to the 4'-position of a tetraacyldisaccharide 1-phosphate intermediate (termed DS-1-P) to form tetraacyldisaccharide 1,4'-bis-phosphate (lipid IVA). This Burkholderia ambifaria (strain ATCC BAA-244 / DSM 16087 / CCUG 44356 / LMG 19182 / AMMD) (Burkholderia cepacia (strain AMMD)) protein is Tetraacyldisaccharide 4'-kinase.